The following is a 322-amino-acid chain: 4-diphosphocytidyl-2-C-methyl-D-erythritol kinase (322 aa).

Lys-25 is an active-site residue. 110 to 120 contributes to the ATP binding site; the sequence is PVAGGMAGGSA. Residue Asp-152 is part of the active site.

Belongs to the GHMP kinase family. IspE subfamily.

It carries out the reaction 4-CDP-2-C-methyl-D-erythritol + ATP = 4-CDP-2-C-methyl-D-erythritol 2-phosphate + ADP + H(+). It participates in isoprenoid biosynthesis; isopentenyl diphosphate biosynthesis via DXP pathway; isopentenyl diphosphate from 1-deoxy-D-xylulose 5-phosphate: step 3/6. Its function is as follows. Catalyzes the phosphorylation of the position 2 hydroxy group of 4-diphosphocytidyl-2C-methyl-D-erythritol. The protein is 4-diphosphocytidyl-2-C-methyl-D-erythritol kinase of Mycolicibacterium vanbaalenii (strain DSM 7251 / JCM 13017 / BCRC 16820 / KCTC 9966 / NRRL B-24157 / PYR-1) (Mycobacterium vanbaalenii).